Reading from the N-terminus, the 266-residue chain is Carboxy-S-adenosyl-L-methionine synthase (266 aa).

The interval 1–24 is disordered; sequence MPKRETQSLHDTQQQPGPTAPQRD. S-adenosyl-L-methionine-binding positions include Tyr-58, 83–85, 108–109, 136–137, Asn-151, and Arg-218; these read GCS, DN, and DI.

Belongs to the class I-like SAM-binding methyltransferase superfamily. Cx-SAM synthase family. As to quaternary structure, homodimer.

It catalyses the reaction prephenate + S-adenosyl-L-methionine = carboxy-S-adenosyl-L-methionine + 3-phenylpyruvate + H2O. Its function is as follows. Catalyzes the conversion of S-adenosyl-L-methionine (SAM) to carboxy-S-adenosyl-L-methionine (Cx-SAM). The chain is Carboxy-S-adenosyl-L-methionine synthase from Yersinia enterocolitica serotype O:8 / biotype 1B (strain NCTC 13174 / 8081).